We begin with the raw amino-acid sequence, 153 residues long: ILNVAVEGALWRLRGTDGKAPSMIGWWPAKAVTFVDNHDTGSTQHMWPFPSDRVMQGYAYILTHPRTPCIFYDHFFDWGPKEEIDRLVSVRTRHGIHNESKLQIIEADADLYLAEIDGKVIVKLGPRYDVGNLIPGGFEGAAHGNDYAVWEKI.

Substrate is bound by residues Lys-19, 25–27 (GWW), His-38, Gln-44, Lys-123, and Trp-150.

Belongs to the glycosyl hydrolase 13 family. In terms of assembly, monomer. The cofactor is Ca(2+).

The catalysed reaction is Endohydrolysis of (1-&gt;4)-alpha-D-glucosidic linkages in polysaccharides containing three or more (1-&gt;4)-alpha-linked D-glucose units.. This is Alpha-amylase type B isozyme (AMY1.4) from Hordeum vulgare (Barley).